The sequence spans 940 residues: Isoleucine--tRNA ligase (940 aa).

Residues 58-68 (PYANGSIHIGH) carry the 'HIGH' region motif. Residue E564 coordinates L-isoleucyl-5'-AMP. The 'KMSKS' region motif lies at 605-609 (KMSKS). Residue K608 participates in ATP binding. The Zn(2+) site is built by C903, C906, C923, and C926.

It belongs to the class-I aminoacyl-tRNA synthetase family. IleS type 1 subfamily. Monomer. The cofactor is Zn(2+).

Its subcellular location is the cytoplasm. The catalysed reaction is tRNA(Ile) + L-isoleucine + ATP = L-isoleucyl-tRNA(Ile) + AMP + diphosphate. In terms of biological role, catalyzes the attachment of isoleucine to tRNA(Ile). As IleRS can inadvertently accommodate and process structurally similar amino acids such as valine, to avoid such errors it has two additional distinct tRNA(Ile)-dependent editing activities. One activity is designated as 'pretransfer' editing and involves the hydrolysis of activated Val-AMP. The other activity is designated 'posttransfer' editing and involves deacylation of mischarged Val-tRNA(Ile). This Shewanella baltica (strain OS223) protein is Isoleucine--tRNA ligase.